The following is a 403-amino-acid chain: Argininosuccinate synthase (403 aa).

Residue 10-18 coordinates ATP; the sequence is AYSGGLDTS. L-citrulline contacts are provided by Y88 and S93. G118 is an ATP binding site. Residues T120, N124, and D125 each contribute to the L-aspartate site. N124 contributes to the L-citrulline binding site. Residues R128, S177, S186, E263, and Y275 each contribute to the L-citrulline site.

Belongs to the argininosuccinate synthase family. Type 1 subfamily. In terms of assembly, homotetramer.

The protein resides in the cytoplasm. It catalyses the reaction L-citrulline + L-aspartate + ATP = 2-(N(omega)-L-arginino)succinate + AMP + diphosphate + H(+). The protein operates within amino-acid biosynthesis; L-arginine biosynthesis; L-arginine from L-ornithine and carbamoyl phosphate: step 2/3. This is Argininosuccinate synthase from Clostridium perfringens (strain ATCC 13124 / DSM 756 / JCM 1290 / NCIMB 6125 / NCTC 8237 / Type A).